We begin with the raw amino-acid sequence, 393 residues long: Cytochrome b (393 aa).

4 helical membrane passes run 33–53 (FGSL…FLAM), 77–98 (WFLR…YLHM), 113–133 (WNIG…GYVL), and 178–198 (FFAI…LHLL). Heme b is bound by residues His83 and His97. His182 and His196 together coordinate heme b. His201 lines the a ubiquinone pocket. Transmembrane regions (helical) follow at residues 226 to 246 (YKDV…ALFA), 288 to 308 (LGGV…PFIH), 320 to 340 (LSQL…WIGG), and 347 to 367 (FIII…ILMP).

The protein belongs to the cytochrome b family. The cytochrome bc1 complex contains 3 respiratory subunits (MT-CYB, CYC1 and UQCRFS1), 2 core proteins (UQCRC1 and UQCRC2) and probably 6 low-molecular weight proteins. Heme b serves as cofactor.

The protein resides in the mitochondrion inner membrane. Its function is as follows. Component of the ubiquinol-cytochrome c reductase complex (complex III or cytochrome b-c1 complex) that is part of the mitochondrial respiratory chain. The b-c1 complex mediates electron transfer from ubiquinol to cytochrome c. Contributes to the generation of a proton gradient across the mitochondrial membrane that is then used for ATP synthesis. This Synbranchus marmoratus (Marbled swamp eel) protein is Cytochrome b (mt-cyb).